Here is a 421-residue protein sequence, read N- to C-terminus: 3-hydroxy-3-methylglutaryl-coenzyme A reductase (421 aa).

Residues Glu-109, Lys-240, and Asp-315 each act as charge relay system in the active site. The active-site Proton donor is the His-410.

It belongs to the HMG-CoA reductase family.

The catalysed reaction is (R)-mevalonate + 2 NADP(+) + CoA = (3S)-3-hydroxy-3-methylglutaryl-CoA + 2 NADPH + 2 H(+). Its pathway is metabolic intermediate biosynthesis; (R)-mevalonate biosynthesis; (R)-mevalonate from acetyl-CoA: step 3/3. Functionally, converts HMG-CoA to mevalonate. This chain is 3-hydroxy-3-methylglutaryl-coenzyme A reductase (hmgA), found in Aeropyrum pernix (strain ATCC 700893 / DSM 11879 / JCM 9820 / NBRC 100138 / K1).